A 217-amino-acid polypeptide reads, in one-letter code: uncharacterized protein (217 aa).

The N-terminal stretch at 1-32 (MPITKATPLFLRYRLKGFVFLTLLLVQGVFTA) is a signal peptide. Cys33 is lipidated: N-palmitoyl cysteine. Cys33 is lipidated: S-diacylglycerol cysteine.

It belongs to the MG067/MG068/MG395 family.

Its subcellular location is the cell membrane. This is an uncharacterized protein from Mycoplasma pneumoniae (strain ATCC 29342 / M129 / Subtype 1) (Mycoplasmoides pneumoniae).